The following is a 389-amino-acid chain: Chalcone synthase 4 (389 aa).

The active site involves Cys-164.

This sequence belongs to the thiolase-like superfamily. Chalcone/stilbene synthases family.

The enzyme catalyses (E)-4-coumaroyl-CoA + 3 malonyl-CoA + 3 H(+) = 2',4,4',6'-tetrahydroxychalcone + 3 CO2 + 4 CoA. It functions in the pathway secondary metabolite biosynthesis; flavonoid biosynthesis. In terms of biological role, the primary product of this enzyme is 4,2',4',6'-tetrahydroxychalcone (also termed naringenin-chalcone or chalcone) which can under specific conditions spontaneously isomerize into naringenin. This is Chalcone synthase 4 (CHS4) from Medicago sativa (Alfalfa).